Here is a 244-residue protein sequence, read N- to C-terminus: MSMLCYTLIIAFLIGTWAAPKSEDNVPLGSPATSDLSDTSCAQTHEGLKTSRNTDQRHPAPKKAEDQELGSVANIIVDPKLFQKRRFQSSRVLFSTQPPPLSRDEQSVEFLDNEDTLNRNIRAKRENHPVHNQGEHSVCDSVSDWVIKTTATDIRGNVVTVMEDINLNNEVYKQYFFETKCRNPSPNPVQSECRGIDSRLWNSYCTTTQTFVRALTMEGNQASWRFIRIDTACVCVIIRKTDNF.

Positions 1–18 are cleaved as a signal peptide; that stretch reads MSMLCYTLIIAFLIGTWA. A propeptide spanning residues 19–125 is cleaved from the precursor; that stretch reads APKSEDNVPL…TLNRNIRAKR (107 aa). A compositionally biased stretch (basic and acidic residues) spans 47-66; that stretch reads GLKTSRNTDQRHPAPKKAED. The interval 47–67 is disordered; that stretch reads GLKTSRNTDQRHPAPKKAEDQ. Intrachain disulfides connect Cys139-Cys205, Cys181-Cys233, and Cys193-Cys235.

This sequence belongs to the NGF-beta family. Homodimer; non-covalently linked. As to expression, expressed by the venom gland.

The protein resides in the secreted. Nerve growth factor is important for the development and maintenance of the sympathetic and sensory nervous systems. It stimulates division and differentiation of sympathetic and embryonic sensory neurons as well as basal forebrain cholinergic neurons in the brain. Its relevance in the snake venom is not clear. However, it has been shown to inhibit metalloproteinase-dependent proteolysis of platelet glycoprotein Ib alpha, suggesting a metalloproteinase inhibition to prevent metalloprotease autodigestion and/or protection against prey proteases. Binds a lipid between the two protein chains in the homodimer. The lipid-bound form promotes histamine relase from mouse mast cells, contrary to the lipid-free form. The sequence is that of Venom nerve growth factor 2 from Tropidechis carinatus (Australian rough-scaled snake).